Reading from the N-terminus, the 198-residue chain is Putative manganese efflux pump MntP (198 aa).

A run of 6 helical transmembrane segments spans residues 3 to 23, 37 to 57, 65 to 85, 105 to 127, 131 to 153, and 171 to 191; these read SIEL…VAIC, VLTG…GYLL, ITSI…INMI, SLTV…FAFL, IIPA…VKIG, and ILIG…SFVF.

This sequence belongs to the MntP (TC 9.B.29) family.

It is found in the cell membrane. In terms of biological role, probably functions as a manganese efflux pump. The chain is Putative manganese efflux pump MntP from Acetivibrio thermocellus (strain ATCC 27405 / DSM 1237 / JCM 9322 / NBRC 103400 / NCIMB 10682 / NRRL B-4536 / VPI 7372) (Clostridium thermocellum).